The sequence spans 138 residues: Large ribosomal subunit protein uL16 (138 aa).

It belongs to the universal ribosomal protein uL16 family. In terms of assembly, part of the 50S ribosomal subunit.

Functionally, binds 23S rRNA and is also seen to make contacts with the A and possibly P site tRNAs. The chain is Large ribosomal subunit protein uL16 from Hyphomonas neptunium (strain ATCC 15444).